The chain runs to 557 residues: Putative inactive polypeptide N-acetylgalactosaminyltransferase 11 (557 aa).

The Cytoplasmic portion of the chain corresponds to 1-4 (MKSL). Residues 5-27 (LFGTPCSCAIFILVYCIITLFIW) traverse the membrane as a helical; Signal-anchor for type II membrane protein segment. The Lumenal portion of the chain corresponds to 28–557 (FLYTDNLSNA…MRDICLSVNH (530 aa)). Asn33 and Asn103 each carry an N-linked (GlcNAc...) asparagine glycan. 5 cysteine pairs are disulfide-bonded: Cys99/Cys325, Cys316/Cys397, Cys437/Cys450, Cys472/Cys486, and Cys511/Cys526. The interval 109–215 (TVTVSIVIAI…RGWLPPLLEP (107 aa)) is catalytic subdomain A. Asn220 carries N-linked (GlcNAc...) asparagine glycosylation. Residues 271 to 333 (PYPSSQLEGR…PCSRVGIIYK (63 aa)) are catalytic subdomain B. The N-linked (GlcNAc...) asparagine glycan is linked to Asn379. The region spanning 456–557 (EDWTLTSRCQ…MRDICLSVNH (102 aa)) is the Ricin B-type lectin domain.

It belongs to the glycosyltransferase 2 family. GalNAc-T subfamily.

The protein resides in the golgi apparatus membrane. Functionally, probable inactive glycosyltransferase. This Drosophila melanogaster (Fruit fly) protein is Putative inactive polypeptide N-acetylgalactosaminyltransferase 11.